Here is a 158-residue protein sequence, read N- to C-terminus: Transcription elongation factor GreA (158 aa).

A coiled-coil region spans residues 47–73; sequence AEYHAAREKQSFIEGRIQELQAKLARA.

It belongs to the GreA/GreB family.

Necessary for efficient RNA polymerase transcription elongation past template-encoded arresting sites. The arresting sites in DNA have the property of trapping a certain fraction of elongating RNA polymerases that pass through, resulting in locked ternary complexes. Cleavage of the nascent transcript by cleavage factors such as GreA or GreB allows the resumption of elongation from the new 3'terminus. GreA releases sequences of 2 to 3 nucleotides. This Thermodesulfovibrio yellowstonii (strain ATCC 51303 / DSM 11347 / YP87) protein is Transcription elongation factor GreA.